Reading from the N-terminus, the 661-residue chain is MKKFKVVSDFKPTGDQPKAIEMLTEGILKGEKFQTLLGVTGSGKTFTMAKVIENVQRPTLVLAHNKTLAAQLCSEFREFFPENAVEFFVSYYDYYQPEAYIPETDTYIEKDSSINDEIDKLRHSATSALFERRDVIIVASVSCIYSLGSPEDYLNLTLSLRPGMIKDRDEVIRELIRMQYERNDIDFRRGRFRVRGDVLEIFPASNTDRAIRVEFFGDEIERITEFDVLTGEVIGRRNHVAIFPASHYVTTSEKLKRAIKSIEEELEQRLQELRSMGKLVEAQRLEQRTRYDIEMLQEMGFCKGIENYSRHLTGRPPGSPPYTLLDYFPKDFIMFIDESHVTIPQVRAMYNGDKARKDALVEYGFRLPSAYDNRPLTFEEFEEKLNQVIFVSATPGPYELKKSSRVVEQIIRPTGLVDPEIEVHPVKGQIDHLIGEIRKRVEKNQRVLITTLTKKMAESLTEYLKDVGIRVRYMHSDIDTIERMQIIRDLRLGKFDVLVGINLLREGLDLPEVSLVAILDADKEGFLRSETSLIQTIGRAARNVDGKVIMYADRITKAMQKAIDETNRRRKIQIEYNQKHGIVPQTVRKGIRQIIEATISVAEEEEKYESIEKDIVQNMSKQEIEEYIKELEQQMKRFAIELEFEKAAKIRDKIFELKKLL.

A Helicase ATP-binding domain is found at 25–178 (EGILKGEKFQ…DEVIRELIRM (154 aa)). An ATP-binding site is contributed by 38–45 (GVTGSGKT). A Beta-hairpin motif is present at residues 91-114 (YYDYYQPEAYIPETDTYIEKDSSI). The region spanning 429-591 (QIDHLIGEIR…IVPQTVRKGI (163 aa)) is the Helicase C-terminal domain. Residues 625-660 (EEYIKELEQQMKRFAIELEFEKAAKIRDKIFELKKL) form the UVR domain.

It belongs to the UvrB family. In terms of assembly, forms a heterotetramer with UvrA during the search for lesions. Interacts with UvrC in an incision complex.

The protein resides in the cytoplasm. In terms of biological role, the UvrABC repair system catalyzes the recognition and processing of DNA lesions. A damage recognition complex composed of 2 UvrA and 2 UvrB subunits scans DNA for abnormalities. Upon binding of the UvrA(2)B(2) complex to a putative damaged site, the DNA wraps around one UvrB monomer. DNA wrap is dependent on ATP binding by UvrB and probably causes local melting of the DNA helix, facilitating insertion of UvrB beta-hairpin between the DNA strands. Then UvrB probes one DNA strand for the presence of a lesion. If a lesion is found the UvrA subunits dissociate and the UvrB-DNA preincision complex is formed. This complex is subsequently bound by UvrC and the second UvrB is released. If no lesion is found, the DNA wraps around the other UvrB subunit that will check the other stand for damage. The chain is UvrABC system protein B from Caldicellulosiruptor saccharolyticus (strain ATCC 43494 / DSM 8903 / Tp8T 6331).